We begin with the raw amino-acid sequence, 369 residues long: Leucine carboxyl methyltransferase 1 (369 aa).

Residues Arg-84, Gly-108, Asp-132, 187–188 (DL), and Glu-215 each bind S-adenosyl-L-methionine.

This sequence belongs to the methyltransferase superfamily. LCMT family.

It catalyses the reaction [phosphatase 2A protein]-C-terminal L-leucine + S-adenosyl-L-methionine = [phosphatase 2A protein]-C-terminal L-leucine methyl ester + S-adenosyl-L-homocysteine. Methylates the carboxyl group of the C-terminal leucine residue of protein phosphatase 2A catalytic subunits to form alpha-leucine ester residues. The polypeptide is Leucine carboxyl methyltransferase 1 (PPM1) (Debaryomyces hansenii (strain ATCC 36239 / CBS 767 / BCRC 21394 / JCM 1990 / NBRC 0083 / IGC 2968) (Yeast)).